A 384-amino-acid polypeptide reads, in one-letter code: O-phospho-L-seryl-tRNA:Cys-tRNA synthase 1 (384 aa).

Pyridoxal 5'-phosphate is bound by residues 88-89 (AR), Asn195, and 218-220 (SGH). At Lys221 the chain carries N6-(pyridoxal phosphate)lysine.

This sequence belongs to the SepCysS family. Homodimer. Interacts with SepRS. The cofactor is pyridoxal 5'-phosphate.

It catalyses the reaction O-phospho-L-seryl-tRNA(Cys) + hydrogen sulfide + H(+) = L-cysteinyl-tRNA(Cys) + phosphate. Its function is as follows. Converts O-phospho-L-seryl-tRNA(Cys) (Sep-tRNA(Cys)) to L-cysteinyl-tRNA(Cys) (Cys-tRNA(Cys)). The chain is O-phospho-L-seryl-tRNA:Cys-tRNA synthase 1 from Methanocella arvoryzae (strain DSM 22066 / NBRC 105507 / MRE50).